The primary structure comprises 446 residues: D-inositol 3-phosphate glycosyltransferase (446 aa).

The segment at Met1–Leu21 is disordered. His34 contributes to the 1D-myo-inositol 3-phosphate binding site. UDP-N-acetyl-alpha-D-glucosamine-binding positions include Gln40 to Pro41 and Gly48. Residues Asp45–Asn50, Lys103, Tyr136, Thr160, and Arg180 contribute to the 1D-myo-inositol 3-phosphate site. Positions 255, 260, and 321 each coordinate UDP-N-acetyl-alpha-D-glucosamine. Positions 330, 331, and 333 each coordinate Mg(2+). The UDP-N-acetyl-alpha-D-glucosamine site is built by Glu343 and Glu351. Residue Thr357 participates in Mg(2+) binding.

The protein belongs to the glycosyltransferase group 1 family. MshA subfamily. As to quaternary structure, homodimer.

It catalyses the reaction 1D-myo-inositol 3-phosphate + UDP-N-acetyl-alpha-D-glucosamine = 1D-myo-inositol 2-acetamido-2-deoxy-alpha-D-glucopyranoside 3-phosphate + UDP + H(+). Its function is as follows. Catalyzes the transfer of a N-acetyl-glucosamine moiety to 1D-myo-inositol 3-phosphate to produce 1D-myo-inositol 2-acetamido-2-deoxy-glucopyranoside 3-phosphate in the mycothiol biosynthesis pathway. The sequence is that of D-inositol 3-phosphate glycosyltransferase from Streptomyces scabiei (strain 87.22).